Reading from the N-terminus, the 548-residue chain is Probable malate:quinone oxidoreductase (548 aa).

A disordered region spans residues K522–L548. Residues A539–L548 show a composition bias toward basic and acidic residues.

The protein belongs to the MQO family. Requires FAD as cofactor.

The enzyme catalyses (S)-malate + a quinone = a quinol + oxaloacetate. The protein operates within carbohydrate metabolism; tricarboxylic acid cycle; oxaloacetate from (S)-malate (quinone route): step 1/1. In Escherichia fergusonii (strain ATCC 35469 / DSM 13698 / CCUG 18766 / IAM 14443 / JCM 21226 / LMG 7866 / NBRC 102419 / NCTC 12128 / CDC 0568-73), this protein is Probable malate:quinone oxidoreductase.